An 85-amino-acid polypeptide reads, in one-letter code: Hepcidin (85 aa).

The signal sequence occupies residues 1–24 (MKTFSVAVAVAVVLAFICLQESSA). The propeptide occupies 25-64 (VPVTEVQELEEPMSNEYQEMPVESWKMPYNNRHKRHSSPG). Intrachain disulfides connect C66-C83, C69-C72, C70-C79, and C73-C82.

As to expression, predominantly expressed in liver.

It is found in the secreted. Its function is as follows. Seems to act as a signaling molecule involved in the maintenance of iron homeostasis. Seems to be required in conjunction with HFE to regulate both intestinal iron absorption and iron storage in macrophages. Antimicrobial activity against Gram-negative bacteria such as E.coli. This chain is Hepcidin (hamp), found in Morone chrysops x Morone saxatilis (White bass x Striped bass).